Reading from the N-terminus, the 287-residue chain is Nucleoid occlusion protein (287 aa).

A DNA-binding region (H-T-H motif) is located at residues 146-165 (EALAQRVGKSQSAIANKMRL).

It belongs to the ParB family.

It is found in the cytoplasm. It localises to the nucleoid. Effects nucleoid occlusion by binding relatively nonspecifically to DNA and preventing the assembly of the division machinery in the vicinity of the nucleoid, especially under conditions that disturb the cell cycle. It helps to coordinate cell division and chromosome segregation by preventing the formation of the Z ring through the nucleoid, which would cause chromosome breakage. This chain is Nucleoid occlusion protein, found in Listeria monocytogenes serotype 4a (strain HCC23).